A 132-amino-acid chain; its full sequence is uncharacterized protein (132 aa).

An N-terminal signal peptide occupies residues 1 to 19 (MKKALFLVGLVFTAGVISS). C20 carries the N-palmitoyl cysteine lipid modification. Residue C20 is the site of S-diacylglycerol cysteine attachment.

The protein localises to the cell membrane. This is an uncharacterized protein from Aquifex aeolicus (strain VF5).